A 765-amino-acid chain; its full sequence is MPNSTTEDSVAVPLLPSLRRATNSTSQVAIVGANVCPIESLDYEIAENDFFKQDWRGRSKVEIFQYVFMKWLLCFCIGIIVSLIGFANNLAVENLAGVKFVVTSNMMIAGRFAMGFVVFSVTNLILTLFASVITAFVAPAAAGSGIPEVKAYLNGVDAPEIFSLRTLIIKIIGNISAVSASLLIGKAGPMVHTGACVASILGQGGSKRYRLTWRWLRFFKNDRDRRDLVTCGAAAGIAASFRAPVGGVLFALEEMSSWWRSALLWRIFFSTAVVAIVLRALIDVCLSGKCGLFGKGGLIMFDVYSENASYHLGDVLPVLLLGVVGGILGSLYNFLLDKVLRAYNYIYEKGVTWKILLACAISIFTSCLLFGLPFLASCQPCPVDALEECPTIGRSGNFKKYQCPPGHYNDLASLIFNTNDDAIKNLFSKNTDFEFHYFSVLVFFVTCFFLSIFSYGIVAPAGLFVPVIVTGASYGRFVGMLLGSNSNLNHGLFAVLGAASFLGGTMRMTVSTCVILLELTNNLLLLPMMMVVLLISKTVADGFNANIYNLIMKLKGFPYLYSHAEPYMRQLLVGDVVTGPLQVFNGIEKVETIVHVLKTTNHNGFPVVDGPPLAAAPVLHGLILRAHILTLLKKRVFMPSPVACDSNTLSQFKAEEFAKKGSGRSDKIEDVELSEEELNMYLDLHPFSNASPYTVVETMSLAKALILFREVGIRHLLVIPKTSNRPPVVGILTRHDFMPEHILGLHPSVSRSKWKRLRIRLPFFS.

The next 12 membrane-spanning stretches (helical) occupy residues 67 to 87 (VFMK…IGFA), 116 to 136 (FVVF…ITAF), 167 to 187 (LIIK…IGKA), 190 to 210 (MVHT…KRYR), 232 to 252 (GAAA…LFAL), 262 to 282 (ALLW…RALI), 315 to 335 (VLPV…YNFL), 355 to 375 (ILLA…LPFL), 438 to 458 (FSVL…YGIV), 462 to 482 (GLFV…GMLL), 494 to 514 (AVLG…STCV), and 515 to 535 (ILLE…VLLI). A CBS 1 domain is found at 568–640 (MRQLLVGDVV…LLKKRVFMPS (73 aa)). Serine 646 is modified (phosphoserine). Positions 687–748 (FSNASPYTVV…PEHILGLHPS (62 aa)) constitute a CBS 2 domain. The chain crosses the membrane as a helical span at residues 715–735 (HLLVIPKTSNRPPVVGILTRH).

The protein belongs to the chloride channel (TC 2.A.49) family. In terms of assembly, homodimer. Interacts with PP2A5.

Its subcellular location is the membrane. Its function is as follows. Putative voltage-gated chloride channel. The sequence is that of Putative chloride channel-like protein CLC-g (CLC-G) from Arabidopsis thaliana (Mouse-ear cress).